A 565-amino-acid chain; its full sequence is NAD-dependent malic enzyme (565 aa).

The active-site Proton donor is Y104. Residue R157 coordinates NAD(+). The active-site Proton acceptor is K175. A divalent metal cation-binding residues include E246, D247, and D270. The NAD(+) site is built by D270 and N418.

Belongs to the malic enzymes family. In terms of assembly, homotetramer. The cofactor is Mg(2+). Requires Mn(2+) as cofactor.

It carries out the reaction (S)-malate + NAD(+) = pyruvate + CO2 + NADH. It catalyses the reaction oxaloacetate + H(+) = pyruvate + CO2. This chain is NAD-dependent malic enzyme, found in Yersinia pseudotuberculosis serotype O:1b (strain IP 31758).